The following is a 256-amino-acid chain: Imidazole glycerol phosphate synthase subunit HisF (256 aa).

Catalysis depends on residues Asp12 and Asp131.

Belongs to the HisA/HisF family. Heterodimer of HisH and HisF.

The protein resides in the cytoplasm. The enzyme catalyses 5-[(5-phospho-1-deoxy-D-ribulos-1-ylimino)methylamino]-1-(5-phospho-beta-D-ribosyl)imidazole-4-carboxamide + L-glutamine = D-erythro-1-(imidazol-4-yl)glycerol 3-phosphate + 5-amino-1-(5-phospho-beta-D-ribosyl)imidazole-4-carboxamide + L-glutamate + H(+). It participates in amino-acid biosynthesis; L-histidine biosynthesis; L-histidine from 5-phospho-alpha-D-ribose 1-diphosphate: step 5/9. Its function is as follows. IGPS catalyzes the conversion of PRFAR and glutamine to IGP, AICAR and glutamate. The HisF subunit catalyzes the cyclization activity that produces IGP and AICAR from PRFAR using the ammonia provided by the HisH subunit. This Stutzerimonas stutzeri (strain A1501) (Pseudomonas stutzeri) protein is Imidazole glycerol phosphate synthase subunit HisF.